Consider the following 266-residue polypeptide: Translation initiation factor 2 subunit alpha (266 aa).

An S1 motif domain is found at 12-83; the sequence is GDIVIGTVKD…RKGHIDLSLK (72 aa).

This sequence belongs to the eIF-2-alpha family. In terms of assembly, heterotrimer composed of an alpha, a beta and a gamma chain.

Functionally, eIF-2 functions in the early steps of protein synthesis by forming a ternary complex with GTP and initiator tRNA. This chain is Translation initiation factor 2 subunit alpha (eif2a), found in Methanocaldococcus jannaschii (strain ATCC 43067 / DSM 2661 / JAL-1 / JCM 10045 / NBRC 100440) (Methanococcus jannaschii).